A 141-amino-acid polypeptide reads, in one-letter code: Large ribosomal subunit protein mL42 (141 aa).

A mitochondrion-targeting transit peptide spans 1–31 (MTAAVKWAVSHRTIWRHLFPIQNGAISSACH).

It belongs to the mitochondrion-specific ribosomal protein mL42 family. In terms of assembly, component of the mitochondrial ribosome large subunit (39S) which comprises a 16S rRNA and about 50 distinct proteins. Component of the mitochondrial ribosome small subunit (28S) which comprises a 12S rRNA and about 30 distinct proteins.

The protein localises to the mitochondrion. The sequence is that of Large ribosomal subunit protein mL42 (Mrpl42) from Rattus norvegicus (Rat).